The sequence spans 743 residues: Merozoite surface protein 9 (743 aa).

The signal sequence occupies residues 1 to 23 (MMNMKIVLFSLLLFVIRWNIISC). An interaction with MSP1 and host SLC4A1/Band 3 region spans residues 77–235 (KELLKEKQYT…VNDEDDVNDE (159 aa)). Disordered regions lie at residues 202–282 (KSQG…ATAY), 459–487 (DNQA…PTED), 512–540 (NNTP…ENFD), and 666–743 (VDAL…EESK). Polar residues predominate over residues 211–224 (SQNQNENNDNQKYQ). 8 consecutive repeat copies span residues 226–231 (VNDEDD), 232–237 (VNDEED), 238–243 (TNDDED), 244–249 (TNDEED), 250–255 (TNDDED), 256–261 (TNDDED), 262–267 (TNDEED), and 268–273 (TNDEED). Residues 226–273 (VNDEDDVNDEEDTNDDEDTNDEEDTNDDEDTNDDEDTNDEEDTNDEED) form an 8 X 6 AA tandem repeats of [VT]-N-D-[ED]-[ED]-D region. Residues 226–274 (VNDEDDVNDEEDTNDDEDTNDEEDTNDDEDTNDDEDTNDEEDTNDEEDH) show a composition bias toward acidic residues. Positions 364–528 (LKDNLINYEF…PPTQSKKKNK (165 aa)) are interaction with MSP1 and host SLC4A1/Band 3. Positions 459–473 (DNQAVDTKSMEEPKV) are enriched in basic and acidic residues. A compositionally biased stretch (low complexity) spans 512 to 521 (NNTPNVVPPT). A coiled-coil region spans residues 644–733 (NQETEEEMEK…QEEEEEEEIV (90 aa)). The span at 672–721 (KNKEEEEKEKEKEEKEKEEKEKEKEEKEKEEKEKEEKEKEEKEEEKKEKE) shows a compositional bias: basic and acidic residues. The segment covering 722-733 (EEQEEEEEEEIV) has biased composition (acidic residues).

Belongs to the plasmodium ABRA family. As to quaternary structure, forms a complex composed of MSP1, MSP6, MSP7, MSP9 and MSP3; within the complex, MSP6 and MSP9 mediate the binding to the host erythrocyte. Interacts with MSP1 subunits p19 and p42; the interaction is direct. Interacts with host SLC4A1/Band 3 protein (via the 5ABC region). MSP1 subunits p19 or p42, and MSP9 form a co-ligand complex that interacts with host SLC4A1/Band 3 protein. Not glycosylated.

It is found in the cell membrane. The protein localises to the parasitophorous vacuole lumen. It localises to the secreted. During the asexual blood stage, involved in the sialic acid-independent (SAID) merozoite invasion of host erythrocytes by binding to host SLC4A1/Band 3 protein on the surface of the host erythrocyte. The polypeptide is Merozoite surface protein 9 (Plasmodium falciparum (isolate 3D7)).